The primary structure comprises 699 residues: Elongation factor G (699 aa).

Positions 8 to 288 (EDYRNFGIMA…AVVDYLPSPM (281 aa)) constitute a tr-type G domain. Residues 17–24 (AHIDAGKT), 86–90 (DTPGH), and 140–143 (NKMD) each bind GTP.

It belongs to the TRAFAC class translation factor GTPase superfamily. Classic translation factor GTPase family. EF-G/EF-2 subfamily.

The protein resides in the cytoplasm. In terms of biological role, catalyzes the GTP-dependent ribosomal translocation step during translation elongation. During this step, the ribosome changes from the pre-translocational (PRE) to the post-translocational (POST) state as the newly formed A-site-bound peptidyl-tRNA and P-site-bound deacylated tRNA move to the P and E sites, respectively. Catalyzes the coordinated movement of the two tRNA molecules, the mRNA and conformational changes in the ribosome. This Rhizobium johnstonii (strain DSM 114642 / LMG 32736 / 3841) (Rhizobium leguminosarum bv. viciae) protein is Elongation factor G.